The chain runs to 676 residues: Periplasmic alpha-amylase (676 aa).

An N-terminal signal peptide occupies residues 1–17; that stretch reads MKLAACFLTLLPGFAVA. 2 disulfides stabilise this stretch: Cys57–Cys75 and Cys121–Cys537. Asn314 is a binding site for Ca(2+). Asp460 serves as the catalytic Nucleophile. Residue His464 coordinates Ca(2+). The active-site Proton donor is Glu503.

The protein belongs to the glycosyl hydrolase 13 family. In terms of assembly, monomer. Ca(2+) serves as cofactor.

Its subcellular location is the periplasm. The catalysed reaction is Endohydrolysis of (1-&gt;4)-alpha-D-glucosidic linkages in polysaccharides containing three or more (1-&gt;4)-alpha-linked D-glucose units.. Its function is as follows. Since only maltooligosaccharides up to a chain length of 6 glucose units are actively transported through the cytoplasmic membrane via the membrane-bound complex of three proteins, MalF, MalG, and MalK, longer maltooligosaccharides must first be degraded by the periplasmic alpha-amylase, the MalS protein. This is Periplasmic alpha-amylase (malS) from Escherichia coli (strain K12).